The primary structure comprises 210 residues: Urease accessory protein UreF (210 aa).

This sequence belongs to the UreF family. As to quaternary structure, ureD, UreF and UreG form a complex that acts as a GTP-hydrolysis-dependent molecular chaperone, activating the urease apoprotein by helping to assemble the nickel containing metallocenter of UreC. The UreE protein probably delivers the nickel.

The protein resides in the cytoplasm. Required for maturation of urease via the functional incorporation of the urease nickel metallocenter. The sequence is that of Urease accessory protein UreF from Cereibacter sphaeroides (strain ATCC 17025 / ATH 2.4.3) (Rhodobacter sphaeroides).